The chain runs to 90 residues: uncharacterized protein (90 aa).

The tract at residues 62 to 90 is disordered; the sequence is RQLKKKQAYKPDPEASFSWSANTSTRGRR. The segment covering 78–90 has biased composition (polar residues); it reads FSWSANTSTRGRR.

This is an uncharacterized protein from Escherichia coli (strain K12).